Consider the following 101-residue polypeptide: MWVIAMFDLPTDTPKARKAYARFRKDLLEDGFTMMQYSVYSRHCASIENAEVHVKRMGAVVPAQGEVRFLTITDNQFGRIKVYVGKKRQPTTQSPSQLQLF.

Aspartate 8 provides a ligand contact to Mg(2+).

This sequence belongs to the CRISPR-associated endoribonuclease Cas2 protein family. As to quaternary structure, homodimer, forms a heterotetramer with a Cas1 homodimer. Requires Mg(2+) as cofactor.

CRISPR (clustered regularly interspaced short palindromic repeat), is an adaptive immune system that provides protection against mobile genetic elements (viruses, transposable elements and conjugative plasmids). CRISPR clusters contain sequences complementary to antecedent mobile elements and target invading nucleic acids. CRISPR clusters are transcribed and processed into CRISPR RNA (crRNA). Functions as a ssRNA-specific endoribonuclease. Involved in the integration of spacer DNA into the CRISPR cassette. This chain is CRISPR-associated endoribonuclease Cas2, found in Parvibaculum lavamentivorans (strain DS-1 / DSM 13023 / NCIMB 13966).